The following is a 147-amino-acid chain: Monothiol glutaredoxin-S5 (147 aa).

In terms of domain architecture, Glutaredoxin spans 49-146 (AAEVRRAVAE…PILKKAGALW (98 aa)). Cys69 contacts [2Fe-2S] cluster. The Responsive for interaction with TGA factors motif lies at 144-147 (ALWL).

The protein belongs to the glutaredoxin family. CC-type subfamily.

It is found in the cytoplasm. The protein localises to the nucleus. May only reduce GSH-thiol disulfides, but not protein disulfides. This is Monothiol glutaredoxin-S5 (GRXS5) from Oryza sativa subsp. japonica (Rice).